Here is a 545-residue protein sequence, read N- to C-terminus: Membrane protein insertase YidC (545 aa).

Helical transmembrane passes span 10 to 30 (AVYL…FLFS), 319 to 339 (LLYF…NVIP), 341 to 361 (WGLS…PLTF), 407 to 427 (IGGC…YGLV), 467 to 487 (ILPF…SNVS), and 502 to 522 (MPIM…IYWI).

The protein belongs to the OXA1/ALB3/YidC family. Type 1 subfamily. As to quaternary structure, interacts with the Sec translocase complex via SecD. Specifically interacts with transmembrane segments of nascent integral membrane proteins during membrane integration.

The protein resides in the cell inner membrane. Required for the insertion and/or proper folding and/or complex formation of integral membrane proteins into the membrane. Involved in integration of membrane proteins that insert both dependently and independently of the Sec translocase complex, as well as at least some lipoproteins. Aids folding of multispanning membrane proteins. This is Membrane protein insertase YidC from Borrelia duttonii (strain Ly).